The primary structure comprises 496 residues: Probable chlorophyll(ide) b reductase NYC1, chloroplastic (496 aa).

The transit peptide at 1-43 (MTTLTKIQVYPQVLEHRLFFRDPIRVGSRLTCRERSNRVYVHR) directs the protein to the chloroplast. Helical transmembrane passes span 105 to 125 (YIVTMTSTGAILLIGFQLSGG) and 132 to 152 (LVWYSWLGGIIIGTMTGANMV). 166-190 (ITGSTRGLGKALAREFLLSGDRVIV) is an NAD(+) binding site. The stretch at 195–224 (SESVDMTVKELEQNLKEIMSNASESARKKL) forms a coiled coil. The active-site Proton acceptor is Y330. A helical transmembrane segment spans residues 470-490 (WVSVFSLSVVCAFIILQSTTP).

This sequence belongs to the short-chain dehydrogenases/reductases (SDR) family. Interacts with NOL to form a complex that acts as a chlorophyll b reductase. Interacts with HCAR, RCCR, SGR1 and the LHCII complex. Part of a SGR1-CCE-LHCII complex, which acts in chlorophyll breakdown.

Its subcellular location is the plastid. The protein resides in the chloroplast thylakoid membrane. It catalyses the reaction 7(1)-hydroxychlorophyllide a + NAD(+) = chlorophyllide b + NADH + H(+). The enzyme catalyses 7(1)-hydroxychlorophyllide a + NADP(+) = chlorophyllide b + NADPH + H(+). Functionally, involved in chlorophyll b degradation. Belongs to the chlorophyll catabolic enzymes (CCEs). The chain is Probable chlorophyll(ide) b reductase NYC1, chloroplastic (NYC1) from Arabidopsis thaliana (Mouse-ear cress).